The chain runs to 945 residues: Cysteine-rich, acidic integral membrane protein (945 aa).

The disordered stretch occupies residues 1–20; that stretch reads MGNEAGPIFEESNAEVGTPP. Residues 1–23 form the signal peptide; sequence MGNEAGPIFEESNAEVGTPPADA. The Extracellular segment spans residues 24 to 882; that stretch reads VHDDFFFDYK…GKGSSVSAGL (859 aa). Asn34 and Asn43 each carry an N-linked (GlcNAc...) asparagine glycan. A run of 66 repeats spans residues 40 to 51, 52 to 63, 64 to 75, 76 to 87, 88 to 99, 100 to 111, 112 to 123, 124 to 135, 136 to 147, 148 to 159, 160 to 171, 172 to 183, 184 to 195, 196 to 207, 208 to 219, 220 to 231, 232 to 243, 244 to 255, 256 to 267, 268 to 279, 280 to 291, 292 to 303, 304 to 315, 316 to 327, 328 to 339, 340 to 351, 352 to 363, 364 to 375, 376 to 387, 388 to 399, 400 to 411, 412 to 423, 424 to 435, 436 to 447, 448 to 459, 460 to 471, 472 to 483, 484 to 495, 496 to 507, 508 to 519, 520 to 531, 532 to 543, 544 to 555, 556 to 567, 568 to 579, 580 to 591, 592 to 603, 604 to 615, 616 to 627, 628 to 639, 640 to 651, 652 to 663, 664 to 675, 676 to 687, 688 to 699, 700 to 711, 712 to 723, 724 to 735, 736 to 747, 748 to 759, 760 to 771, 772 to 783, 784 to 795, 796 to 807, 808 to 819, and 820 to 831. The segment at 40 to 831 is 66 X 12 AA tandem repeats of D-D-C-[ND]-I-T-G-D-G-N-E-T; it reads DDCNITGDCN…CNITGDCNET (792 aa). Residues Asn67, Asn79, Asn91, and Asn103 are each glycosylated (N-linked (GlcNAc...) asparagine). Residues Asn127, Asn139, and Asn151 are each glycosylated (N-linked (GlcNAc...) asparagine). N-linked (GlcNAc...) asparagine glycosylation is present at Asn175. Residues Asn199, Asn211, Asn223, Asn235, Asn247, and Asn259 are each glycosylated (N-linked (GlcNAc...) asparagine). Asn283, Asn295, Asn307, Asn319, Asn331, and Asn343 each carry an N-linked (GlcNAc...) asparagine glycan. 5 N-linked (GlcNAc...) asparagine glycosylation sites follow: Asn367, Asn379, Asn391, Asn403, and Asn415. N-linked (GlcNAc...) asparagine glycosylation occurs at Asn439. 6 N-linked (GlcNAc...) asparagine glycosylation sites follow: Asn463, Asn475, Asn487, Asn499, Asn511, and Asn523. 5 N-linked (GlcNAc...) asparagine glycosylation sites follow: Asn547, Asn559, Asn571, Asn583, and Asn595. Asn619 carries an N-linked (GlcNAc...) asparagine glycan. Asn643, Asn655, Asn667, Asn679, Asn691, and Asn703 each carry an N-linked (GlcNAc...) asparagine glycan. 5 N-linked (GlcNAc...) asparagine glycosylation sites follow: Asn727, Asn739, Asn751, Asn763, and Asn775. A glycan (N-linked (GlcNAc...) asparagine) is linked at Asn799. N-linked (GlcNAc...) asparagine glycosylation occurs at Asn823. The helical transmembrane segment at 883–903 threads the bilayer; it reads LLLAGSTFLVLAVGLSAVLFL. Topologically, residues 904–945 are cytoplasmic; the sequence is GRERQNAVVICDNEVMMEEVPGCLSDASFAVPVTQSSDEARP.

The protein resides in the flagellar pocket. It is found in the cell membrane. In terms of biological role, supposed to function as cell surface receptor. Possibly involved in receptor-mediated endocytosis. This is Cysteine-rich, acidic integral membrane protein (CRAM) from Trypanosoma brucei brucei.